The primary structure comprises 361 residues: MPVNPPPTAPADNLNLDKAIEFKFPQELGKPPLREGVAPKLLLGHLVVLPIYLSGGTPLGGHDGVQEDLLVVPQLLNTTPDKLNLNLISRHPHIRLTDNTLKLPYRNIRREAEEVKGIPGVPITLGRERRAQWHNIVFQDTVVKRHLNPVVQDLLKLRGAVRGETDPPWLKRGYNTRVADHVHDRKLVGKAYNAHIRLPGKVVEELIPVPGKGLIDLVHYDDHLSLRGPFPNLLHNVQEPKTSSGGPGNGRCDLVGGAVRNDVLNHRVTGVLLEFVDHILRRDGLPRSWGPYNQQVWWGGAVEDVPQVLADSTHLFLPVLQGVRYKQRAEDIPVFEKFRSLLKHLQLPAIQLYNSKPYFYM.

This is an uncharacterized protein from Methanothermobacter thermautotrophicus (Methanobacterium thermoformicicum).